Reading from the N-terminus, the 241-residue chain is uncharacterized protein (241 aa).

A GGDEF domain is found at 84 to 216; the sequence is TVVSLVVCDL…APGPVVAGRD (133 aa). Residues 215 to 241 form a disordered region; it reads RDGEVVRLADSPPKSAHDRRRLRGNRP. The span at 231–241 shows a compositional bias: basic residues; the sequence is HDRRRLRGNRP.

This is an uncharacterized protein from Streptomyces griseus.